A 300-amino-acid polypeptide reads, in one-letter code: Auxin-responsive protein IAA7 (300 aa).

2 disordered regions span residues 1–80 and 92–125; these read MGEA…DGDK and VSHSQGKANKNKGSPEEEEAHPPPATGNNALASN. Residues 43–47 carry the EAR-like (transcriptional repression) motif; sequence LSLGL. The segment covering 92–103 has biased composition (polar residues); it reads VSHSQGKANKNK. The region spanning 177 to 281 is the PB1 domain; sequence APFIKINMDG…SVKRLRVLKT (105 aa).

This sequence belongs to the Aux/IAA family. As to quaternary structure, homodimers and heterodimers. In terms of tissue distribution, expressed at low levels in roots and shoots.

Its subcellular location is the nucleus. Functionally, aux/IAA proteins are short-lived transcriptional factors that function as repressors of early auxin response genes at low auxin concentrations. The chain is Auxin-responsive protein IAA7 (IAA7) from Oryza sativa subsp. japonica (Rice).